The sequence spans 163 residues: 18 kDa protein (163 aa).

The protein is 18 kDa protein of Mus musculus (Mouse).